The following is a 312-amino-acid chain: Glyoxylate/hydroxypyruvate reductase A (312 aa).

R227 is a catalytic residue. Catalysis depends on H275, which acts as the Proton donor.

Belongs to the D-isomer specific 2-hydroxyacid dehydrogenase family. GhrA subfamily.

Its subcellular location is the cytoplasm. It catalyses the reaction glycolate + NADP(+) = glyoxylate + NADPH + H(+). The enzyme catalyses (R)-glycerate + NAD(+) = 3-hydroxypyruvate + NADH + H(+). The catalysed reaction is (R)-glycerate + NADP(+) = 3-hydroxypyruvate + NADPH + H(+). Catalyzes the NADPH-dependent reduction of glyoxylate and hydroxypyruvate into glycolate and glycerate, respectively. This Salmonella heidelberg (strain SL476) protein is Glyoxylate/hydroxypyruvate reductase A.